The primary structure comprises 305 residues: Homoserine O-acetyltransferase (305 aa).

Cys-142 functions as the Acyl-thioester intermediate in the catalytic mechanism. Residues Lys-163 and Ser-192 each contribute to the substrate site. The active-site Proton acceptor is the His-235. Glu-237 is a catalytic residue. Arg-249 serves as a coordination point for substrate.

The protein belongs to the MetA family.

It localises to the cytoplasm. The catalysed reaction is L-homoserine + acetyl-CoA = O-acetyl-L-homoserine + CoA. It participates in amino-acid biosynthesis; L-methionine biosynthesis via de novo pathway; O-acetyl-L-homoserine from L-homoserine: step 1/1. In terms of biological role, transfers an acetyl group from acetyl-CoA to L-homoserine, forming acetyl-L-homoserine. The chain is Homoserine O-acetyltransferase from Roseobacter denitrificans (strain ATCC 33942 / OCh 114) (Erythrobacter sp. (strain OCh 114)).